The primary structure comprises 196 residues: 3-isopropylmalate dehydratase small subunit (196 aa).

Belongs to the LeuD family. LeuD type 1 subfamily. As to quaternary structure, heterodimer of LeuC and LeuD.

The enzyme catalyses (2R,3S)-3-isopropylmalate = (2S)-2-isopropylmalate. It participates in amino-acid biosynthesis; L-leucine biosynthesis; L-leucine from 3-methyl-2-oxobutanoate: step 2/4. Catalyzes the isomerization between 2-isopropylmalate and 3-isopropylmalate, via the formation of 2-isopropylmaleate. The sequence is that of 3-isopropylmalate dehydratase small subunit from Streptococcus thermophilus (strain CNRZ 1066).